The following is a 266-amino-acid chain: Apolipoprotein A-I (266 aa).

The signal sequence occupies residues 1-18 (MKAVVLTLAVLFLTGSQA). 2 tandem repeats follow at residues 67 to 88 (LKLLDNWDTLGSTVTKLREQIG) and 89 to 110 (PVTQEFWDNLEKETEVLRQEMS). Positions 67 to 266 (LKLLDNWDTL…DEATKKLNAQ (200 aa)) are 10 X approximate tandem repeats. Residue Met109 is modified to Methionine sulfoxide. Residues 111 to 121 (KDLEEVKQKVQ) form a 3; half-length repeat. 5 repeat units span residues 122 to 143 (PYLDDFQKKWQEEVELYRQKVA), 144 to 165 (PLGTELREGARQKLQELHEKLS), 166 to 187 (PLGEELRDRARTHVDALRAQLA), 188 to 209 (PYSDELRERLAARLQALKESGG), and 210 to 231 (ASLAEYHAKASEHLSTLSEKAK). One copy of the 9; half-length repeat lies at 232–242 (PALEDLRQGLL). Copy 10 of the repeat occupies 243–266 (PVLESFKVGLMAIVDEATKKLNAQ).

Belongs to the apolipoprotein A1/A4/E family. Homodimer. Interacts with APOA1BP and CLU. Component of a sperm activating protein complex (SPAP), consisting of APOA1, an immunoglobulin heavy chain, an immunoglobulin light chain and albumin. Interacts with NDRG1. Interacts with SCGB3A2. Interacts with NAXE and YJEFN3. Post-translationally, glycosylated. Palmitoylated. In terms of processing, phosphorylation sites are present in the extracellular medium.

It localises to the secreted. Functionally, participates in the reverse transport of cholesterol from tissues to the liver for excretion by promoting cholesterol efflux from tissues and by acting as a cofactor for the lecithin cholesterol acyltransferase (LCAT). As part of the SPAP complex, activates spermatozoa motility. The protein is Apolipoprotein A-I (APOA1) of Acinonyx jubatus (Cheetah).